The primary structure comprises 549 residues: Cation/acetate symporter ActP (549 aa).

13 consecutive transmembrane segments (helical) span residues 33–53 (WQAI…TYWA), 77–97 (LAIA…ALVF), 103–123 (GLIY…LIAE), 148–168 (ILSA…QMVG), 183–203 (IAVV…GMLA), 206–226 (WVQI…AFMV), 262–282 (ISAL…PHIL), 303–323 (GFMG…IMLV), 355–375 (LFLG…VAGL), 404–424 (VSKI…VLFE), 428–448 (IAFM…PIIL), 464–484 (GGWL…TIWV), and 493–513 (IFPY…GIWF).

Belongs to the sodium:solute symporter (SSF) (TC 2.A.21) family.

It localises to the cell inner membrane. In terms of biological role, transports acetate. The sequence is that of Cation/acetate symporter ActP from Escherichia fergusonii (strain ATCC 35469 / DSM 13698 / CCUG 18766 / IAM 14443 / JCM 21226 / LMG 7866 / NBRC 102419 / NCTC 12128 / CDC 0568-73).